The chain runs to 353 residues: Histidinol-phosphate aminotransferase (353 aa).

Lys214 bears the N6-(pyridoxal phosphate)lysine mark.

The protein belongs to the class-II pyridoxal-phosphate-dependent aminotransferase family. Histidinol-phosphate aminotransferase subfamily. As to quaternary structure, homodimer. It depends on pyridoxal 5'-phosphate as a cofactor.

It catalyses the reaction L-histidinol phosphate + 2-oxoglutarate = 3-(imidazol-4-yl)-2-oxopropyl phosphate + L-glutamate. Its pathway is amino-acid biosynthesis; L-histidine biosynthesis; L-histidine from 5-phospho-alpha-D-ribose 1-diphosphate: step 7/9. The chain is Histidinol-phosphate aminotransferase from Gloeobacter violaceus (strain ATCC 29082 / PCC 7421).